The sequence spans 149 residues: Transcriptional repressor NrdR (149 aa).

A zinc finger lies at 3-34; the sequence is CPFCFAVDTKVIDSRLVGEGSSVRRRRQCLVC. The ATP-cone domain occupies 49 to 139; the sequence is PRVVKSNDVR…VYRSFEDIKE (91 aa).

Belongs to the NrdR family. Zn(2+) is required as a cofactor.

In terms of biological role, negatively regulates transcription of bacterial ribonucleotide reductase nrd genes and operons by binding to NrdR-boxes. The polypeptide is Transcriptional repressor NrdR (Klebsiella pneumoniae (strain 342)).